A 230-amino-acid chain; its full sequence is Flagellar L-ring protein (230 aa).

The signal sequence occupies residues 1–21 (MMLKTVLRLPVCAALLALAAG). A lipid anchor (N-palmitoyl cysteine) is attached at Cys-22. The S-diacylglycerol cysteine moiety is linked to residue Cys-22. A disordered region spans residues 34 to 53 (PLTAPPPPPPQPSARPNGSI). Residues 36–46 (TAPPPPPPQPS) show a composition bias toward pro residues.

This sequence belongs to the FlgH family. In terms of assembly, the basal body constitutes a major portion of the flagellar organelle and consists of four rings (L,P,S, and M) mounted on a central rod.

The protein resides in the cell outer membrane. The protein localises to the bacterial flagellum basal body. In terms of biological role, assembles around the rod to form the L-ring and probably protects the motor/basal body from shearing forces during rotation. This is Flagellar L-ring protein from Bordetella bronchiseptica (strain ATCC BAA-588 / NCTC 13252 / RB50) (Alcaligenes bronchisepticus).